We begin with the raw amino-acid sequence, 332 residues long: Ferredoxin--NADP reductase 2 (332 aa).

Asp33, Gln41, Tyr46, Val86, Ile121, Asp282, and Ser325 together coordinate FAD.

Belongs to the ferredoxin--NADP reductase type 2 family. Homodimer. FAD serves as cofactor.

It catalyses the reaction 2 reduced [2Fe-2S]-[ferredoxin] + NADP(+) + H(+) = 2 oxidized [2Fe-2S]-[ferredoxin] + NADPH. The polypeptide is Ferredoxin--NADP reductase 2 (Sulfolobus acidocaldarius (strain ATCC 33909 / DSM 639 / JCM 8929 / NBRC 15157 / NCIMB 11770)).